Here is a 359-residue protein sequence, read N- to C-terminus: Protein disulfide-isomerase C17H9.14c (359 aa).

Positions 1–19 are cleaved as a signal peptide; that stretch reads MRLPLLSFVIFALFALVFA. 2 consecutive Thioredoxin domains span residues 20–130 and 134–250; these read SGVV…EKTG and RKIV…KKSG. Catalysis depends on nucleophile residues Cys51 and Cys54. Cystine bridges form between Cys51–Cys54 and Cys170–Cys173.

Belongs to the protein disulfide isomerase family.

The enzyme catalyses Catalyzes the rearrangement of -S-S- bonds in proteins.. Its function is as follows. Participates in the folding of proteins containing disulfide bonds, may be involved in glycosylation, prolyl hydroxylation and triglyceride transfer. The chain is Protein disulfide-isomerase C17H9.14c from Schizosaccharomyces pombe (strain 972 / ATCC 24843) (Fission yeast).